A 376-amino-acid polypeptide reads, in one-letter code: Pyrimidine monooxygenase RutA (376 aa).

FMN contacts are provided by residues 61-62 (IK), N127, E136, 152-153 (RY), and S202.

The protein belongs to the NtaA/SnaA/DszA monooxygenase family. RutA subfamily.

The enzyme catalyses uracil + FMNH2 + NADH + O2 = (Z)-3-ureidoacrylate + FMN + NAD(+) + H2O + H(+). It carries out the reaction thymine + FMNH2 + NADH + O2 = (Z)-2-methylureidoacrylate + FMN + NAD(+) + H2O + H(+). In terms of biological role, catalyzes the pyrimidine ring opening between N-3 and C-4 by an unusual flavin hydroperoxide-catalyzed mechanism, adding oxygen atoms in the process to yield ureidoacrylate peracid, that immediately reacts with FMN forming ureidoacrylate and FMN-N(5)-oxide. The FMN-N(5)-oxide reacts spontaneously with NADH to produce FMN. Requires the flavin reductase RutF to regenerate FMN in vivo. In Methylorubrum populi (strain ATCC BAA-705 / NCIMB 13946 / BJ001) (Methylobacterium populi), this protein is Pyrimidine monooxygenase RutA.